The following is a 365-amino-acid chain: Ribosomal RNA large subunit methyltransferase F (365 aa).

The disordered stretch occupies residues 1-49 (MSKPAVKSVQSATAKTATRAVNIRQKVKAPKQAKPEAKGRVRPSKDKPR). The span at 33–49 (AKPEAKGRVRPSKDKPR) shows a compositional bias: basic and acidic residues.

This sequence belongs to the methyltransferase superfamily. METTL16/RlmF family.

Its subcellular location is the cytoplasm. The catalysed reaction is adenosine(1618) in 23S rRNA + S-adenosyl-L-methionine = N(6)-methyladenosine(1618) in 23S rRNA + S-adenosyl-L-homocysteine + H(+). In terms of biological role, specifically methylates the adenine in position 1618 of 23S rRNA. The polypeptide is Ribosomal RNA large subunit methyltransferase F (Shewanella baltica (strain OS185)).